The primary structure comprises 539 residues: Protein PNS1 (539 aa).

Residues 1–38 (MPLNEKYERPPQPPPAYDPNHRPPSSSENSAAANVNDG) form a disordered region. Residues 1–81 (MPLNEKYERP…NDNKPRWNDW (81 aa)) are Cytoplasmic-facing. Positions 25–36 (SSSENSAAANVN) are enriched in low complexity. Residues 82 to 102 (PFTIFFLCTVGGFIAIAAITL) traverse the membrane as a helical segment. Residues 103–129 (RAWSQTYSSTGSGIYDGVNTGTLNTNA) are Extracellular-facing. Residues 130 to 150 (AILLVFVCIIALVFSVLGLTL) form a helical membrane-spanning segment. At 151–157 (CRIFPKQ) the chain is on the cytoplasmic side. Residues 158–178 (FIYCGMVINLVASLGTAIMYM) form a helical membrane-spanning segment. Over 179-182 (SLRY) the chain is Extracellular. A helical transmembrane segment spans residues 183–203 (WSAGIVFLVFTFMTAWCYWGM). The Cytoplasmic portion of the chain corresponds to 204–226 (RSRIPLSVAVLKVVVDAMKKCPQ). Residues 227–247 (IFFVSFVGALVASAFGFLFSA) form a helical membrane-spanning segment. Residues 248–274 (VIVATYIKYDPNSSNGGCDVSGGSCSH) are Extracellular-facing. The N-linked (GlcNAc...) asparagine glycan is linked to Asn259. Residues 275–295 (SKLIGVLVVVFFCGYYISEVI) form a helical membrane-spanning segment. At 296–332 (RNVIHCVISGVFGSWYYMSKSDQGMPRWPAFGALKRA) the chain is on the cytoplasmic side. The chain crosses the membrane as a helical span at residues 333-353 (MTYSFGSICFGSLLVALIDLL). Residues 354-371 (RQILQMIRHDVTSSGGGQ) lie on the Extracellular side of the membrane. The helical transmembrane segment at 372–392 (IAIQILFMVFDWIIGFLKWLA) threads the bilayer. Residues 393–436 (EYFNHYAYSFIALYGKPYLRAAKETWYMLREKGMDALINDNLIN) are Cytoplasmic-facing. A helical transmembrane segment spans residues 437 to 457 (IALGLFSMFASYMTALFTFLY). At 458–473 (LRFTSPQYNSNGAYNG) the chain is on the extracellular side. Residues 474-494 (ALMAFSFVIALQICNIATEAI) traverse the membrane as a helical segment. Topologically, residues 495–539 (RSGTATFFVALGNDPEVFHHSYPHRFDEIFRAYPDVLRKLSHQNV) are cytoplasmic.

Belongs to the CTL (choline transporter-like) family.

The protein localises to the cell membrane. Probably involved in transport through the plasma membrane. The protein is Protein PNS1 (PNS1) of Saccharomyces cerevisiae (strain ATCC 204508 / S288c) (Baker's yeast).